The chain runs to 488 residues: Long chain base biosynthesis protein 2a (488 aa).

The chain crosses the membrane as a helical span at residues 4–24; it reads LPYTTALTTLFSYGLLFAFGQ. Position 311 is an N6-(pyridoxal phosphate)lysine (K311).

It belongs to the class-II pyridoxal-phosphate-dependent aminotransferase family. As to quaternary structure, heterodimer with LCB1. Component of the serine palmitoyltransferase (SPT) complex, composed of LCB1 and LCB2. Requires pyridoxal 5'-phosphate as cofactor.

It is found in the endoplasmic reticulum membrane. The catalysed reaction is L-serine + hexadecanoyl-CoA + H(+) = 3-oxosphinganine + CO2 + CoA. It functions in the pathway lipid metabolism; sphingolipid metabolism. Serine palmitoyltransferase (SPT). The heterodimer formed with LCB1 constitutes the catalytic core. The protein is Long chain base biosynthesis protein 2a of Oryza sativa subsp. japonica (Rice).